A 125-amino-acid chain; its full sequence is Fluoride-specific ion channel FluC (125 aa).

Transmembrane regions (helical) follow at residues 4-24 (IALV…VGVW), 35-55 (WGTL…VELV), 68-88 (FLVT…LDAV), and 100-120 (AFYI…GLAL). Glycine 75 and threonine 78 together coordinate Na(+).

Belongs to the fluoride channel Fluc/FEX (TC 1.A.43) family.

Its subcellular location is the cell inner membrane. It catalyses the reaction fluoride(in) = fluoride(out). Its activity is regulated as follows. Na(+) is not transported, but it plays an essential structural role and its presence is essential for fluoride channel function. In terms of biological role, fluoride-specific ion channel. Important for reducing fluoride concentration in the cell, thus reducing its toxicity. This Agrobacterium fabrum (strain C58 / ATCC 33970) (Agrobacterium tumefaciens (strain C58)) protein is Fluoride-specific ion channel FluC.